The chain runs to 205 residues: Holliday junction branch migration complex subunit RuvA (205 aa).

The interval 1 to 62 is domain I; it reads MFEYVTGYVE…EDIMALYGFK (62 aa). Residues 63–141 are domain II; it reads TREERLLFTK…DVVPDAFVDL (79 aa). A flexible linker region spans residues 142–152; sequence FSDTERFDEKK. Positions 153-205 are domain III; it reads GTSAELDEALEALRALGYAEREVSRVVPELLKESLTTDQYIKKALSLLLNGKR.

It belongs to the RuvA family. As to quaternary structure, homotetramer. Forms an RuvA(8)-RuvB(12)-Holliday junction (HJ) complex. HJ DNA is sandwiched between 2 RuvA tetramers; dsDNA enters through RuvA and exits via RuvB. An RuvB hexamer assembles on each DNA strand where it exits the tetramer. Each RuvB hexamer is contacted by two RuvA subunits (via domain III) on 2 adjacent RuvB subunits; this complex drives branch migration. In the full resolvosome a probable DNA-RuvA(4)-RuvB(12)-RuvC(2) complex forms which resolves the HJ.

The protein localises to the cytoplasm. In terms of biological role, the RuvA-RuvB-RuvC complex processes Holliday junction (HJ) DNA during genetic recombination and DNA repair, while the RuvA-RuvB complex plays an important role in the rescue of blocked DNA replication forks via replication fork reversal (RFR). RuvA specifically binds to HJ cruciform DNA, conferring on it an open structure. The RuvB hexamer acts as an ATP-dependent pump, pulling dsDNA into and through the RuvAB complex. HJ branch migration allows RuvC to scan DNA until it finds its consensus sequence, where it cleaves and resolves the cruciform DNA. The polypeptide is Holliday junction branch migration complex subunit RuvA (Bacillus cereus (strain G9842)).